Here is a 309-residue protein sequence, read N- to C-terminus: Probable copper-dependent oxygenase clz3 (309 aa).

2 N-linked (GlcNAc...) asparagine glycosylation sites follow: Asn-9 and Asn-249. The helical transmembrane segment at Phe-257–Ile-277 threads the bilayer.

The protein belongs to the clz3 oxygenase family.

It is found in the membrane. The protein operates within secondary metabolite biosynthesis. In terms of biological role, probable copper-dependent oxygenase; part of the gene cluster that mediates the biosynthesis of squalestatin S1 (SQS1, also known as zaragozic acid A), a heavily oxidized fungal polyketide that offers potent cholesterol lowering activity by targeting squalene synthase (SS). SQS1 is composed of a 2,8-dioxobicyclic[3.2.1]octane-3,4,5-tricarboxyclic acid core that is connected to two lipophilic polyketide arms. These initial steps feature the priming of an unusual benzoic acid starter unit onto the highly reducing polyketide synthase clz14, followed by oxaloacetate extension and product release to generate a tricarboxylic acid containing product. The phenylalanine ammonia lyase (PAL) clz10 and the acyl-CoA ligase clz12 are involved in transforming phenylalanine into benzoyl-CoA. The citrate synthase-like protein clz17 is involved in connecting the C-alpha-carbons of the hexaketide chain and oxaloacetate to afford the tricarboxylic acid unit. The potential hydrolytic enzymes, clz11 and clz13, are in close proximity to pks2 and may participate in product release. On the other side, the tetraketide arm is synthesized by a the squalestatin tetraketide synthase clz2 and enzymatically esterified to the core in the last biosynthetic step, by the acetyltransferase clz6. The biosynthesis of the tetraketide must involve 3 rounds of chain extension. After the first and second rounds methyl-transfer occurs, and in all rounds of extension the ketoreductase and dehydratase are active. The enoyl reductase and C-MeT of clz2 are not active in the final round of extension. The acetyltransferase clz6 appears to have a broad substrate selectivity for its acyl CoA substrate, allowing the in vitro synthesis of novel squalestatins. The biosynthesis of SQS1 requires several oxidative steps likely performed by oxidoreductases clz3, clz15 and clz16. Finally, in support of the identification of the cluster as being responsible for SQS1 production, the cluster contains a gene encoding a putative squalene synthase (SS) clz20, suggesting a likely mechanism for self-resistance. This Cochliobolus lunatus (Filamentous fungus) protein is Probable copper-dependent oxygenase clz3.